A 321-amino-acid polypeptide reads, in one-letter code: uncharacterized protein (321 aa).

Tyrosine 60 (proton donor) is an active-site residue. Residue histidine 118 coordinates substrate.

This sequence belongs to the aldo/keto reductase family.

This is an uncharacterized protein from Schizosaccharomyces pombe (strain 972 / ATCC 24843) (Fission yeast).